Reading from the N-terminus, the 156-residue chain is MQVQRQLKRDLDKANRYFNKHFTPPTVSYTVRGRKAGVAYLQQNEIRLNPILLSENSSNFVQQVVPHELAHLLVYQQFGQVQPHGKEWKMMMKEVLGVPAETYHCFDVTNVAGQQFPYRCGCQTHFLSIRRHNAIMQHKRSYICKKCKEILVLKVK.

The region spanning 15 to 153 (NRYFNKHFTP…CKKCKEILVL (139 aa)) is the SprT-like domain. His-67 is a binding site for Zn(2+). Residue Glu-68 is part of the active site. Residue His-71 participates in Zn(2+) binding.

This sequence belongs to the SprT family. Zn(2+) serves as cofactor.

The protein localises to the cytoplasm. In Glaesserella parasuis serovar 5 (strain SH0165) (Haemophilus parasuis), this protein is Protein SprT.